Consider the following 341-residue polypeptide: MAKITAQLVKELRERTGAGVMDAKKALVEVDGDMDKAVQYLRDKGMAKAAKKADRVAAEGLTGVYVDGNVAAITEVNSETDFVSSNDKFVKLVNEATKTIAEGKPADMEAAEELKMADGTTLGQSFVDATATIGEKIVLRRFALEEKTDDQEFGAYQHNGGQIGVITVLEGADAATAKHLAMHIAAMSPKVISPDELDDEFITDQLAVMNHKIDQDNESRALVNKKPLPHLVYGSEKQLSDDVLAKAKEDIKAELKEEGKPEKIWDKIIPGKMQRFIDDNTQVDKQFAVLSQNYIMDDSKTVGEFLKEKGAKLVAFQRYEVGEGIEKKQEDFAAEVREQMK.

Residues threonine 80–valine 83 are involved in Mg(2+) ion dislocation from EF-Tu.

The protein belongs to the EF-Ts family.

The protein localises to the cytoplasm. Its function is as follows. Associates with the EF-Tu.GDP complex and induces the exchange of GDP to GTP. It remains bound to the aminoacyl-tRNA.EF-Tu.GTP complex up to the GTP hydrolysis stage on the ribosome. In Lactobacillus johnsonii (strain CNCM I-12250 / La1 / NCC 533), this protein is Elongation factor Ts.